The following is a 288-amino-acid chain: 33 kDa chaperonin (288 aa).

Cystine bridges form between cysteine 235–cysteine 237 and cysteine 268–cysteine 271.

It belongs to the HSP33 family. Under oxidizing conditions two disulfide bonds are formed involving the reactive cysteines. Under reducing conditions zinc is bound to the reactive cysteines and the protein is inactive.

It localises to the cytoplasm. Functionally, redox regulated molecular chaperone. Protects both thermally unfolding and oxidatively damaged proteins from irreversible aggregation. Plays an important role in the bacterial defense system toward oxidative stress. The protein is 33 kDa chaperonin of Streptococcus thermophilus (strain ATCC BAA-250 / LMG 18311).